A 391-amino-acid chain; its full sequence is UPF0229 protein BCG9842_B4751 (391 aa).

Polar residues predominate over residues 1–16 (MGEENQPNYTISQENW). Disordered stretches follow at residues 1 to 31 (MGEE…RHQE) and 80 to 117 (HVGQ…GDAA). The segment covering 21-31 (KGYDDQQRHQE) has biased composition (basic and acidic residues). Residues 98-115 (GSGGQKQKGPGKGQGAGD) show a composition bias toward gly residues.

Belongs to the UPF0229 family.

In Bacillus cereus (strain G9842), this protein is UPF0229 protein BCG9842_B4751.